The primary structure comprises 452 residues: Putative purine permease CPE0397 (452 aa).

A run of 12 helical transmembrane segments spans residues 34–54 (IFAAFGGIIVVPLVIATSLGF), 58–78 (VTTALISASILGSGLATIIQA), 83–103 (KVGARVACIMGTDFTFVSPAI), 108–128 (VLGLPGIIGATILGSLFEVIL), 138–158 (FFPPLVTGTVVALIGLTLLPV), 172–192 (YASLENLAVAMFVLVITLLLN), 201–221 (SASILIGIVVGYIVCIPLGLV), 250–270 (MAFIPAYFVATIGTVGCLKAI), 326–346 (AVMAGILLVILGFLPKVAAII), 348–368 (GIPNPVLGGVGIMMFGTVAAA), 383–403 (LLIIAISMGLGLGVTFRPDVI), and 412–432 (MIFSSGISTGTIAALILNAVL).

Belongs to the nucleobase:cation symporter-2 (NCS2) (TC 2.A.40) family.

The protein localises to the cell membrane. This chain is Putative purine permease CPE0397 (cpx), found in Clostridium perfringens (strain 13 / Type A).